Reading from the N-terminus, the 676-residue chain is Envelope glycoprotein (676 aa).

An N-terminal signal peptide occupies residues 1–32 (MGVTGILQLPRDRFKRTSFFLWVIILFQRTFS). At 33-650 (IPLGVIHNST…NDNWWTGWRQ (618 aa)) the chain is on the extracellular side. An N-linked (GlcNAc...) asparagine; by host glycan is attached at Asn40. 5 disulfides stabilise this stretch: Cys53–Cys609, Cys108–Cys135, Cys121–Cys147, Cys511–Cys556, and Cys601–Cys608. Residues 54-201 (RDKLSSTNQL…DFFSSHPLRE (148 aa)) form a receptor-binding region. N-linked (GlcNAc...) asparagine; by host glycosylation is found at Asn204, Asn228, Asn238, Asn257, Asn268, Asn296, Asn317, Asn333, Asn346, Asn386, and Asn413. Residues 305–485 (ELSFTVVSNG…SGKLGLITNT (181 aa)) are mucin-like region. Positions 315–335 (AKNISGQSPARTSSDPGTNTT) are enriched in polar residues. Residues 315–337 (AKNISGQSPARTSSDPGTNTTTE) are disordered. Residues 373-391 (TSPQSLTTKPGPDNSTHNT) are compositionally biased toward polar residues. Disordered stretches follow at residues 373 to 392 (TSPQ…HNTP) and 402 to 479 (TQVE…SGKL). Low complexity predominate over residues 414 to 432 (DSTASDTPSATTAAGPPKA). The span at 433 to 464 (ENTNTSKSTDFLDPATTTSPQNHSETAGNNNT) shows a compositional bias: polar residues. 3 N-linked (GlcNAc...) asparagine; by host glycosylation sites follow: Asn436, Asn454, and Asn462. Positions 524–539 (GAAIGLAWIPYFGPAA) are fusion peptide. Residues 554 to 595 (LICGLRQLANETTQALQLFLRATTELRTFSILNRKAIDFLLQ) are a coiled coil. Asn563 carries N-linked (GlcNAc...) asparagine; by host glycosylation. The stretch at 615-634 (WTKNITDKIDQIIHDFVDKT) forms a coiled coil. The N-linked (GlcNAc...) asparagine; by host glycan is linked to Asn618. Residues 651–671 (WIPAGIGVTGVIIAVIALFCI) form a helical membrane-spanning segment. The Important role for host BST2/tetherin antagonism signature appears at 660-664 (GVIIA). 2 S-palmitoyl cysteine; by host lipidation sites follow: Cys670 and Cys672. Topologically, residues 672–676 (CKFVF) are cytoplasmic.

This sequence belongs to the filoviruses glycoprotein family. As to quaternary structure, homotrimer; each monomer consists of a GP1 and a GP2 subunit linked by disulfide bonds. The resulting peplomers (GP1,2) protrude from the virus surface as spikes. Interacts with host integrin alpha-V/ITGAV. Interacts with host CLEC10A. Also binds to host CD209 and CLEC4M/DC-SIGN(R). Interacts with host FOLR1. Interacts with BST2; this interaction inhibits the antiviral effect of BST2 and this allows viral release from infected cells. Interacts with host FCN1; this interaction enhances viral entry. Interacts with host TLR4; this interaction induces cell death in T-lymphocytes or proinflammatory cytokines and SOCS1 production in monocytes. In terms of assembly, interacts with host entry receptor NPC1. GP1 and GP2delta are part of GP1,2delta soluble complexes released by ectodomain shedding. In terms of processing, the signal peptide region modulates GP's high mannose glycosylation, thereby determining the efficiency of the interactions with DC-SIGN(R). N-glycosylated. Post-translationally, glycosylated; glycosylation is essential for the activation of dendritic cells and macrophages. In terms of processing, O-glycosylated in the mucin-like region. Palmitoylation is not required for its function. Post-translationally, specific enzymatic cleavages in vivo yield mature proteins. The precursor is processed into GP1 and GP2 by host cell furin in the trans Golgi, and maybe by other host proteases, to yield the mature GP1 and GP2 proteins. The cleavage site corresponds to the furin optimal cleavage sequence [KR]-X-[KR]-R. This cleavage does not seem to be required for function. After the internalization of the virus into cell endosomes, GP1 C-terminus is removed by the endosomal proteases cathepsin B, cathepsin L, or both, leaving a 19-kDa N-terminal fragment which is further digested by cathepsin B. This cleaved 19-kDa GP1 can then bind to the host entry receptor NPC1. Proteolytic processing of GP1,2 by host ADAM17 can remove the transmembrane anchor of GP2 and leads to shedding of complexes consisting in GP1 and truncated GP2 (GP1,2delta).

The protein localises to the virion membrane. Its subcellular location is the host cell membrane. It is found in the secreted. In terms of biological role, trimeric GP1,2 complexes form the virion surface spikes and mediate the viral entry processes, with GP1 acting as the receptor-binding subunit and GP2 as the membrane fusion subunit. At later times of infection, down-regulates the expression of various host cell surface molecules that are essential for immune surveillance and cell adhesion. Down-modulates several integrins including ITGA1, ITGA2, ITGA3, ITGA4, ITGA5, ITGA6, ITGAV and ITGB1. This decrease in cell adhesion molecules may lead to cell detachment, contributing to the disruption of blood vessel integrity and hemorrhages developed during infection (cytotoxicity). Interacts with host TLR4 and thereby stimulates the differentiation and activation of monocytes leading to bystander death of T-lymphocytes. Down-regulates as well the function of host natural killer cells. Counteracts the antiviral effect of host BST2/tetherin that restricts release of progeny virions from infected cells. However, cooperates with VP40 and host BST2 to activate canonical NF-kappa-B pathway in a manner dependent on neddylation. Functions as a decoy for anti-GP1,2 antibodies thereby contributing to viral immune evasion. Interacts and activates host macrophages and dendritic cells inducing up-regulation of cytokine transcription. This effect is mediated throught activation of host TLR4. Its function is as follows. Responsible for binding to the receptor(s) on target cells. Interacts with CD209/DC-SIGN and CLEC4M/DC-SIGNR which act as cofactors for virus entry into dendritic cells (DCs) and endothelial cells. Binding to the macrophage specific lectin CLEC10A also seems to enhance virus infectivity. Interaction with FOLR1/folate receptor alpha may be a cofactor for virus entry in some cell types, although results are contradictory. Members of the Tyro3 receptor tyrosine kinase family also seem to be cell entry factors in filovirus infection. Once attached, the virions are internalized through clathrin-dependent endocytosis and/or macropinocytosis. After internalization of the virus into the endosomes of the host cell, proteolysis of GP1 by two cysteine proteases, CTSB/cathepsin B and CTSL/cathepsin L removes the glycan cap and allows GP1 binding to the host entry receptor NPC1. NPC1-binding, Ca(2+) and acidic pH induce a conformational change of GP2, which unmasks its fusion peptide and permit membranes fusion. Functionally, acts as a class I viral fusion protein. Under the current model, the protein has at least 3 conformational states: pre-fusion native state, pre-hairpin intermediate state, and post-fusion hairpin state. During viral and target cell membrane fusion, the coiled coil regions (heptad repeats) assume a trimer-of-hairpins structure, positioning the fusion peptide in close proximity to the C-terminal region of the ectodomain. The formation of this structure appears to drive apposition and subsequent fusion of viral and target cell membranes. Responsible for penetration of the virus into the cell cytoplasm by mediating the fusion of the membrane of the endocytosed virus particle with the endosomal membrane. Low pH in endosomes induces an irreversible conformational change in GP2, releasing the fusion hydrophobic peptide. The sequence is that of Envelope glycoprotein (GP) from Epomops franqueti (Franquet's epauletted fruit bat).